The sequence spans 200 residues: COMM domain-containing protein 7 (200 aa).

A COMM domain is found at 133–200 (QLIDMEWKFG…RVRTSMECFC (68 aa)).

This sequence belongs to the COMM domain-containing protein 7 family. As to quaternary structure, component of the commander complex consisting of the CCC subcomplex and the retriever subcomplex. Component of the CCC (COMMD/CCDC22/CCDC93) subcomplex consisting of COMMD1, COMMD2, COMMD3, COMMD4, COMMD5, COMMD6, COMMD7, COMMD8, COMMD9, COMMD10, CCDC22 and CCDC93; within the complex forms a heterodimer with COMMD9. Interacts with RELA. Interacts with CCDC22, CCDC93, SCNN1B, CUL7. As to expression, widely expressed with highest expression in lung.

Its subcellular location is the cytoplasmic vesicle. Functionally, scaffold protein in the commander complex that is essential for endosomal recycling of transmembrane cargos; the commander complex is composed of the CCC subcomplex and the retriever subcomplex. May modulate activity of cullin-RING E3 ubiquitin ligase (CRL) complexes. Associates with the NF-kappa-B complex and suppresses its transcriptional activity. The polypeptide is COMM domain-containing protein 7 (COMMD7) (Homo sapiens (Human)).